Consider the following 288-residue polypeptide: Elongation factor Ts (288 aa).

Residues 79-82 (TDFV) are involved in Mg(2+) ion dislocation from EF-Tu.

The protein belongs to the EF-Ts family.

The protein resides in the cytoplasm. Associates with the EF-Tu.GDP complex and induces the exchange of GDP to GTP. It remains bound to the aminoacyl-tRNA.EF-Tu.GTP complex up to the GTP hydrolysis stage on the ribosome. The protein is Elongation factor Ts of Ehrlichia canis (strain Jake).